An 862-amino-acid polypeptide reads, in one-letter code: Taxadiene synthase (862 aa).

Mg(2+) is bound by residues Asp-613, Asp-617, Asn-757, Thr-761, and Glu-765. The DDXXD motif signature appears at 613 to 617 (DDMAD).

Belongs to the terpene synthase family. It depends on Mg(2+) as a cofactor.

It carries out the reaction (2E,6E,10E)-geranylgeranyl diphosphate = taxa-4(5),11(12)-diene + diphosphate. Its pathway is alkaloid biosynthesis; taxol biosynthesis; taxa-4(20),11-dien-5alpha-ol from geranylgeranyl diphosphate: step 1/2. Functionally, catalyzes the cyclization of the ubiquitous isoprenoid intermediate geranylgeranyl diphosphate to taxa-4,11-diene, the parent olefin with a taxane skeleton. The protein is Taxadiene synthase (TDC1) of Taxus baccata (English yew).